Reading from the N-terminus, the 579-residue chain is Glutamine--tRNA ligase (579 aa).

The 'HIGH' region motif lies at Pro41–His51. ATP contacts are provided by residues Glu42–Asn44 and His48–Ala54. The L-glutamine site is built by Asp74 and Tyr218. ATP contacts are provided by residues Thr237, Arg285 to Leu286, and Met293 to Lys295. A 'KMSKS' region motif is present at residues Val292–Arg296.

Belongs to the class-I aminoacyl-tRNA synthetase family. Monomer.

It is found in the cytoplasm. It carries out the reaction tRNA(Gln) + L-glutamine + ATP = L-glutaminyl-tRNA(Gln) + AMP + diphosphate. The polypeptide is Glutamine--tRNA ligase (Xanthomonas euvesicatoria pv. vesicatoria (strain 85-10) (Xanthomonas campestris pv. vesicatoria)).